The primary structure comprises 847 residues: B-cell receptor CD22 (847 aa).

The first 19 residues, 1–19 (MHLLGPWLLLLVLEYLAFS), serve as a signal peptide directing secretion. The region spanning 20–138 (DSSKWAFEHP…MERIHLNVSE (119 aa)) is the Ig-like V-type domain. The Extracellular portion of the chain corresponds to 20–687 (DSSKWAFEHP…YYSPETIGRR (668 aa)). Residues Asn-67, Asn-101, and Asn-112 are each glycosylated (N-linked (GlcNAc...) asparagine). Residue Arg-120 coordinates N-acetylneuraminate. Residues Asn-135, Asn-164, and Asn-231 are each glycosylated (N-linked (GlcNAc...) asparagine). Ig-like C2-type domains follow at residues 143 to 235 (PHIQ…DTVQ), 242 to 326 (PKLE…VFLQ), 331 to 416 (PEPS…LDVQ), 419 to 500 (PKKV…VALN), 505 to 582 (PRDV…QTAS), and 593 to 676 (PRRL…STLT). A disulfide bond links Cys-161 and Cys-219. 2 disulfide bridges follow: Cys-265-Cys-309 and Cys-353-Cys-396. 5 N-linked (GlcNAc...) asparagine glycosylation sites follow: Asn-363, Asn-428, Asn-445, Asn-448, and Asn-479. Intrachain disulfides connect Cys-442-Cys-484 and Cys-529-Cys-571. Residues Asn-574 and Asn-634 are each glycosylated (N-linked (GlcNAc...) asparagine). A disulfide bridge links Cys-616 with Cys-659. The helical transmembrane segment at 688–708 (VAVGFGSCLAILILAICGLKL) threads the bilayer. Residues 709 to 847 (QRRWKRTQSQ…ENVDYVILKH (139 aa)) are Cytoplasmic-facing. Residues Ser-725, Ser-726, and Ser-729 each carry the phosphoserine modification. 2 short sequence motifs (ITIM motif) span residues 760–765 (ISYTTL) and 794–799 (VTYSVL). Tyr-762 carries the phosphotyrosine modification. 3 positions are modified to phosphotyrosine: Tyr-807, Tyr-822, and Tyr-842. 2 short sequence motifs (ITIM motif) span residues 820–825 (IHYSEL) and 840–845 (VDYVIL).

It belongs to the immunoglobulin superfamily. SIGLEC (sialic acid binding Ig-like lectin) family. As to quaternary structure, predominantly monomer of isoform CD22-beta. Also found as heterodimer of isoform CD22-beta and a shorter isoform. Interacts with PTPN6/SHP-1, LYN, SYK, PIK3R1/PIK3R2 and PLCG1 upon phosphorylation. Interacts with GRB2, INPP5D and SHC1 upon phosphorylation. May form a complex with INPP5D/SHIP, GRB2 and SHC1. Phosphorylation of Tyr-762, Tyr-807 and Tyr-822 are involved in binding to SYK, GRB2 and SYK, respectively. Phosphorylation of Tyr-842 is involved in binding to SYK, PLCG2 and PIK3R1/PIK3R2. In terms of processing, phosphorylated on tyrosine residues by LYN.

The protein resides in the cell membrane. Functionally, most highly expressed siglec (sialic acid-binding immunoglobulin-like lectin) on B-cells that plays a role in various aspects of B-cell biology including differentiation, antigen presentation, and trafficking to bone marrow. Binds to alpha 2,6-linked sialic acid residues of surface molecules such as CD22 itself, CD45 and IgM in a cis configuration. Can also bind to ligands on other cells as an adhesion molecule in a trans configuration. Acts as an inhibitory coreceptor on the surface of B-cells and inhibits B-cell receptor induced signaling, characterized by inhibition of the calcium mobilization and cellular activation. Mechanistically, the immunoreceptor tyrosine-based inhibitory motif domain is phosphorylated by the Src kinase LYN, which in turn leads to the recruitment of the protein tyrosine phosphatase 1/PTPN6, leading to the negative regulation of BCR signaling. If this negative signaling from is of sufficient strength, apoptosis of the B-cell can be induced. The chain is B-cell receptor CD22 from Pan troglodytes (Chimpanzee).